Reading from the N-terminus, the 154-residue chain is uncharacterized protein (154 aa).

The HTH marR-type domain occupies 1-143 (MTESERALLT…LRKLAGSLTK (143 aa)). The H-T-H motif DNA-binding region spans 57-80 (LSKLAMSLDLKPASVTRMTDILYK).

This is an uncharacterized protein from Bacillus subtilis (strain 168).